A 215-amino-acid polypeptide reads, in one-letter code: UPF0502 protein Gbem_0102 (215 aa).

The protein belongs to the UPF0502 family.

The chain is UPF0502 protein Gbem_0102 from Citrifermentans bemidjiense (strain ATCC BAA-1014 / DSM 16622 / JCM 12645 / Bem) (Geobacter bemidjiensis).